Reading from the N-terminus, the 156-residue chain is Protein-export protein SecB (156 aa).

It belongs to the SecB family. Homotetramer, a dimer of dimers. One homotetramer interacts with 1 SecA dimer.

It is found in the cytoplasm. Its function is as follows. One of the proteins required for the normal export of preproteins out of the cell cytoplasm. It is a molecular chaperone that binds to a subset of precursor proteins, maintaining them in a translocation-competent state. It also specifically binds to its receptor SecA. This is Protein-export protein SecB from Paraburkholderia xenovorans (strain LB400).